A 287-amino-acid polypeptide reads, in one-letter code: Succinate dehydrogenase [ubiquinone] iron-sulfur subunit, mitochondrial (287 aa).

Residues 1 to 23 constitute a mitochondrion transit peptide; sequence MISNVLKRASVLARSNGIQSAFY. In terms of domain architecture, 2Fe-2S ferredoxin-type spans 51–140; it reads FQVYRYNEET…GDTVKVYPLP (90 aa). [2Fe-2S] cluster contacts are provided by C101, C106, C109, and C121. A 4Fe-4S ferredoxin-type domain is found at 186–216; the sequence is NRHKLDGLYECILCACCSTSCPSYWWSEGGD. Positions 196, 199, and 202 each coordinate [4Fe-4S] cluster. C206 serves as a coordination point for [3Fe-4S] cluster. An a ubiquinone-binding site is contributed by W211. [3Fe-4S] cluster-binding residues include C257 and C263. Position 267 (C267) interacts with [4Fe-4S] cluster.

The protein belongs to the succinate dehydrogenase/fumarate reductase iron-sulfur protein family. As to quaternary structure, component of complex II composed of four subunits: the flavoprotein (FP) SDHA, iron-sulfur protein (IP) SDHB, and a cytochrome b composed of a large and a small subunit. [2Fe-2S] cluster is required as a cofactor. Requires [3Fe-4S] cluster as cofactor. The cofactor is [4Fe-4S] cluster.

It localises to the mitochondrion inner membrane. The enzyme catalyses a quinone + succinate = fumarate + a quinol. The protein operates within carbohydrate metabolism; tricarboxylic acid cycle; fumarate from succinate (eukaryal route): step 1/1. In terms of biological role, iron-sulfur protein (IP) subunit of succinate dehydrogenase (SDH) that is involved in complex II of the mitochondrial electron transport chain and is responsible for transferring electrons from succinate to ubiquinone (coenzyme Q). This Dictyostelium discoideum (Social amoeba) protein is Succinate dehydrogenase [ubiquinone] iron-sulfur subunit, mitochondrial (sdhB).